The following is a 638-amino-acid chain: 1-deoxy-D-xylulose-5-phosphate synthase (638 aa).

Thiamine diphosphate contacts are provided by residues His-71 and 112-114 (SHA). Asp-144 contributes to the Mg(2+) binding site. Thiamine diphosphate-binding positions include 145–146 (GA), Asn-173, Tyr-284, and Glu-365. Residue Asn-173 participates in Mg(2+) binding.

It belongs to the transketolase family. DXPS subfamily. As to quaternary structure, homodimer. Mg(2+) serves as cofactor. Thiamine diphosphate is required as a cofactor.

The enzyme catalyses D-glyceraldehyde 3-phosphate + pyruvate + H(+) = 1-deoxy-D-xylulose 5-phosphate + CO2. The protein operates within metabolic intermediate biosynthesis; 1-deoxy-D-xylulose 5-phosphate biosynthesis; 1-deoxy-D-xylulose 5-phosphate from D-glyceraldehyde 3-phosphate and pyruvate: step 1/1. In terms of biological role, catalyzes the acyloin condensation reaction between C atoms 2 and 3 of pyruvate and glyceraldehyde 3-phosphate to yield 1-deoxy-D-xylulose-5-phosphate (DXP). The protein is 1-deoxy-D-xylulose-5-phosphate synthase of Mycobacterium sp. (strain KMS).